Here is an 87-residue protein sequence, read N- to C-terminus: Small ribosomal subunit protein uS15 (87 aa).

The protein belongs to the universal ribosomal protein uS15 family. As to quaternary structure, part of the 30S ribosomal subunit. Forms a bridge to the 50S subunit in the 70S ribosome, contacting the 23S rRNA.

Its function is as follows. One of the primary rRNA binding proteins, it binds directly to 16S rRNA where it helps nucleate assembly of the platform of the 30S subunit by binding and bridging several RNA helices of the 16S rRNA. Functionally, forms an intersubunit bridge (bridge B4) with the 23S rRNA of the 50S subunit in the ribosome. The polypeptide is Small ribosomal subunit protein uS15 (Alkaliphilus oremlandii (strain OhILAs) (Clostridium oremlandii (strain OhILAs))).